Reading from the N-terminus, the 210-residue chain is Large ribosomal subunit protein uL3 (210 aa).

Residues 125–151 (RHGQSRGPMSHGSRYHRRPGSMGPVAP) are disordered.

It belongs to the universal ribosomal protein uL3 family. Part of the 50S ribosomal subunit. Forms a cluster with proteins L14 and L19.

In terms of biological role, one of the primary rRNA binding proteins, it binds directly near the 3'-end of the 23S rRNA, where it nucleates assembly of the 50S subunit. This Bacillus cereus (strain ATCC 14579 / DSM 31 / CCUG 7414 / JCM 2152 / NBRC 15305 / NCIMB 9373 / NCTC 2599 / NRRL B-3711) protein is Large ribosomal subunit protein uL3.